Here is a 179-residue protein sequence, read N- to C-terminus: Adenine phosphoribosyltransferase (179 aa).

This sequence belongs to the purine/pyrimidine phosphoribosyltransferase family. In terms of assembly, homodimer.

The protein localises to the cytoplasm. It carries out the reaction AMP + diphosphate = 5-phospho-alpha-D-ribose 1-diphosphate + adenine. It functions in the pathway purine metabolism; AMP biosynthesis via salvage pathway; AMP from adenine: step 1/1. Catalyzes a salvage reaction resulting in the formation of AMP, that is energically less costly than de novo synthesis. This is Adenine phosphoribosyltransferase from Nitrobacter winogradskyi (strain ATCC 25391 / DSM 10237 / CIP 104748 / NCIMB 11846 / Nb-255).